A 335-amino-acid polypeptide reads, in one-letter code: Ferredoxin--NADP reductase (335 aa).

D35, Q43, Y48, A88, F122, D287, and S328 together coordinate FAD.

Belongs to the ferredoxin--NADP reductase type 2 family. In terms of assembly, homodimer. FAD is required as a cofactor.

It carries out the reaction 2 reduced [2Fe-2S]-[ferredoxin] + NADP(+) + H(+) = 2 oxidized [2Fe-2S]-[ferredoxin] + NADPH. This is Ferredoxin--NADP reductase from Thermus thermophilus (strain ATCC BAA-163 / DSM 7039 / HB27).